The primary structure comprises 146 residues: Large-conductance mechanosensitive channel (146 aa).

2 helical membrane-spanning segments follow: residues 12-32 and 88-108; these read AFAM…GGAF and LQAT…IKLI.

It belongs to the MscL family. As to quaternary structure, homopentamer.

It localises to the cell inner membrane. In terms of biological role, channel that opens in response to stretch forces in the membrane lipid bilayer. May participate in the regulation of osmotic pressure changes within the cell. The polypeptide is Large-conductance mechanosensitive channel (Bacteroides fragilis (strain ATCC 25285 / DSM 2151 / CCUG 4856 / JCM 11019 / LMG 10263 / NCTC 9343 / Onslow / VPI 2553 / EN-2)).